A 440-amino-acid polypeptide reads, in one-letter code: tRNA(Ile)-lysidine synthase (440 aa).

19–24 provides a ligand contact to ATP; it reads SGGLDS.

The protein belongs to the tRNA(Ile)-lysidine synthase family.

It is found in the cytoplasm. The enzyme catalyses cytidine(34) in tRNA(Ile2) + L-lysine + ATP = lysidine(34) in tRNA(Ile2) + AMP + diphosphate + H(+). Ligates lysine onto the cytidine present at position 34 of the AUA codon-specific tRNA(Ile) that contains the anticodon CAU, in an ATP-dependent manner. Cytidine is converted to lysidine, thus changing the amino acid specificity of the tRNA from methionine to isoleucine. This is tRNA(Ile)-lysidine synthase from Buchnera aphidicola subsp. Acyrthosiphon pisum (strain APS) (Acyrthosiphon pisum symbiotic bacterium).